The following is a 130-amino-acid chain: Histone H2A type 1-D (130 aa).

Positions 1 to 22 are disordered; it reads MSGRGKQGGKARAKAKTRSSRA. Residue S2 is modified to N-acetylserine. The residue at position 2 (S2) is a Phosphoserine; by RPS6KA5. R4 bears the Citrulline; alternate mark. R4 is modified (symmetric dimethylarginine; by PRMT5; alternate). Residues K6 and K10 each carry the N6-(2-hydroxyisobutyryl)lysine; alternate modification. K6 is subject to N6-acetyllysine; alternate. Basic residues predominate over residues 7–19; it reads QGGKARAKAKTRS. K10 and K14 each carry N6-(beta-hydroxybutyryl)lysine; alternate. K10 is modified (N6-lactoyllysine; alternate). K10 carries the N6-succinyllysine; alternate modification. A Glycyl lysine isopeptide (Lys-Gly) (interchain with G-Cter in ubiquitin); alternate cross-link involves residue K14. K16 participates in a covalent cross-link: Glycyl lysine isopeptide (Lys-Gly) (interchain with G-Cter in ubiquitin). Residue K37 is modified to N6-(2-hydroxyisobutyryl)lysine; alternate. K37 bears the N6-(beta-hydroxybutyryl)lysine; alternate mark. K37 carries the post-translational modification N6-crotonyllysine; alternate. 2 positions are modified to N6-(2-hydroxyisobutyryl)lysine: K75 and K76. K96 is modified (N6-(2-hydroxyisobutyryl)lysine; alternate). N6-(beta-hydroxybutyryl)lysine; alternate is present on K96. K96 bears the N6-succinyllysine; alternate mark. The residue at position 96 (K96) is an N6-glutaryllysine; alternate. K100 is modified (N6-glutaryllysine). Position 105 is an N5-methylglutamine (Q105). N6-(2-hydroxyisobutyryl)lysine; alternate is present on K119. N6-(beta-hydroxybutyryl)lysine; alternate is present on K119. An N6-crotonyllysine; alternate mark is found at K119 and K120. An N6-glutaryllysine; alternate mark is found at K119 and K120. A Glycyl lysine isopeptide (Lys-Gly) (interchain with G-Cter in ubiquitin); alternate cross-link involves residue K120. T121 bears the Phosphothreonine; by DCAF1 mark. K126 bears the N6-crotonyllysine; alternate mark. N6-glutaryllysine; alternate is present on K126.

Belongs to the histone H2A family. The nucleosome is a histone octamer containing two molecules each of H2A, H2B, H3 and H4 assembled in one H3-H4 heterotetramer and two H2A-H2B heterodimers. The octamer wraps approximately 147 bp of DNA. In terms of processing, deiminated on Arg-4 in granulocytes upon calcium entry. Post-translationally, monoubiquitination of Lys-120 (H2AK119Ub) by RING1, TRIM37 and RNF2/RING2 complex gives a specific tag for epigenetic transcriptional repression and participates in X chromosome inactivation of female mammals. It is involved in the initiation of both imprinted and random X inactivation. Ubiquitinated H2A is enriched in inactive X chromosome chromatin. Ubiquitination of H2A functions downstream of methylation of 'Lys-27' of histone H3 (H3K27me). H2AK119Ub by RNF2/RING2 can also be induced by ultraviolet and may be involved in DNA repair. Monoubiquitination of Lys-120 (H2AK119Ub) by TRIM37 may promote transformation of cells in a number of breast cancers. Following DNA double-strand breaks (DSBs), it is ubiquitinated through 'Lys-63' linkage of ubiquitin moieties by the E2 ligase UBE2N and the E3 ligases RNF8 and RNF168, leading to the recruitment of repair proteins to sites of DNA damage. Ubiquitination at Lys-14 and Lys-16 (H2AK13Ub and H2AK15Ub, respectively) in response to DNA damage is initiated by RNF168 that mediates monoubiquitination at these 2 sites, and 'Lys-63'-linked ubiquitin are then conjugated to monoubiquitin; RNF8 is able to extend 'Lys-63'-linked ubiquitin chains in vitro. Deubiquitinated by USP51 at Lys-14 and Lys-16 (H2AK13Ub and H2AK15Ub, respectively) after damaged DNA is repaired. H2AK119Ub and ionizing radiation-induced 'Lys-63'-linked ubiquitination (H2AK13Ub and H2AK15Ub) are distinct events. Phosphorylation on Ser-2 (H2AS1ph) is enhanced during mitosis. Phosphorylation on Ser-2 by RPS6KA5/MSK1 directly represses transcription. Acetylation of H3 inhibits Ser-2 phosphorylation by RPS6KA5/MSK1. Phosphorylation at Thr-121 (H2AT120ph) by DCAF1 is present in the regulatory region of many tumor suppresor genes and down-regulates their transcription. In terms of processing, glutamine methylation at Gln-105 (H2AQ104me) by FBL is specifically dedicated to polymerase I. It is present at 35S ribosomal DNA locus and impairs binding of the FACT complex. Post-translationally, symmetric dimethylation on Arg-4 by the PRDM1/PRMT5 complex may play a crucial role in the germ-cell lineage. Crotonylation (Kcr) is specifically present in male germ cells and marks testis-specific genes in post-meiotic cells, including X-linked genes that escape sex chromosome inactivation in haploid cells. Crotonylation marks active promoters and enhancers and confers resistance to transcriptional repressors. It is also associated with post-meiotically activated genes on autosomes. In terms of processing, lactylated in macrophages by EP300/P300 by using lactoyl-CoA directly derived from endogenous or exogenous lactate, leading to stimulates gene transcription.

It is found in the nucleus. It localises to the chromosome. In terms of biological role, core component of nucleosome. Nucleosomes wrap and compact DNA into chromatin, limiting DNA accessibility to the cellular machineries which require DNA as a template. Histones thereby play a central role in transcription regulation, DNA repair, DNA replication and chromosomal stability. DNA accessibility is regulated via a complex set of post-translational modifications of histones, also called histone code, and nucleosome remodeling. The protein is Histone H2A type 1-D of Homo sapiens (Human).